Here is a 475-residue protein sequence, read N- to C-terminus: Mitochondrial adenyl nucleotide antiporter SLC25A24 (475 aa).

The regulatory N-terminal domain stretch occupies residues methionine 1–aspartate 173. Over methionine 1–glutamine 197 the chain is Mitochondrial intermembrane. 4 EF-hand domains span residues glutamate 19–proline 54, leucine 55–glutamate 88, aspartate 86–histidine 121, and isoleucine 122–threonine 157. The Ca(2+) site is built by aspartate 32, asparagine 34, aspartate 36, valine 38, glutamate 43, aspartate 68, asparagine 70, aspartate 72, lysine 74, glutamate 79, aspartate 99, asparagine 101, aspartate 103, lysine 105, glutamate 110, aspartate 135, aspartate 137, threonine 139, threonine 141, and glutamate 146. The tract at residues isoleucine 159–histidine 168 is linker region. The interval isoleucine 174 to lysine 475 is C-terminal transmembrane transporter domain. Solcar repeat units follow at residues glycine 192 to leucine 276, leucine 284 to tyrosine 369, and proline 381 to threonine 469. Residues leucine 198 to leucine 215 traverse the membrane as a helical segment. The Mitochondrial matrix segment spans residues aspartate 216–arginine 250. A helical transmembrane segment spans residues glycine 251–tyrosine 270. Topologically, residues glutamate 271 to glycine 293 are mitochondrial intermembrane. The chain crosses the membrane as a helical span at residues serine 294–methionine 307. Residues glutamate 308–lysine 343 lie on the Mitochondrial matrix side of the membrane. Lysine 318 bears the N6-acetyllysine; alternate mark. Lysine 318 carries the post-translational modification N6-succinyllysine; alternate. Lysine 334 bears the N6-acetyllysine mark. A helical transmembrane segment spans residues glycine 344–tyrosine 363. Residues glutamate 364–leucine 386 are Mitochondrial intermembrane-facing. The helical transmembrane segment at leucine 387 to leucine 404 threads the bilayer. Topologically, residues alanine 405–arginine 443 are mitochondrial matrix. Position 435 is an N6-acetyllysine; alternate (lysine 435). An N6-succinyllysine; alternate modification is found at lysine 435. The helical transmembrane segment at glycine 444–tyrosine 463 threads the bilayer. The Mitochondrial intermembrane segment spans residues glutamate 464–lysine 475.

Belongs to the mitochondrial carrier (TC 2.A.29) family. As to quaternary structure, monomer.

The protein localises to the mitochondrion inner membrane. The catalysed reaction is Mg(2+)(out) + phosphate(in) + ATP(out) = Mg(2+)(in) + phosphate(out) + ATP(in). It catalyses the reaction ADP(out) + phosphate(in) + H(+)(out) = ADP(in) + phosphate(out) + H(+)(in). It carries out the reaction AMP(out) + phosphate(in) = AMP(in) + phosphate(out). The enzyme catalyses phosphate(in) + ATP(out) + 2 H(+)(out) = phosphate(out) + ATP(in) + 2 H(+)(in). The catalysed reaction is dADP(in) + ADP(out) = dADP(out) + ADP(in). It catalyses the reaction Mg(2+)(in) + ADP(out) + ATP(in) + H(+)(out) = Mg(2+)(out) + ADP(in) + ATP(out) + H(+)(in). It carries out the reaction ADP(out) + diphosphate(in) = ADP(in) + diphosphate(out). The enzyme catalyses dAMP(in) + ADP(out) + H(+)(out) = dAMP(out) + ADP(in) + H(+)(in). The catalysed reaction is 3'-AMP(in) + ADP(out) + H(+)(out) = 3'-AMP(out) + ADP(in) + H(+)(in). It catalyses the reaction dAMP(out) + phosphate(in) = dAMP(in) + phosphate(out). It carries out the reaction 3'-AMP(out) + phosphate(in) = 3'-AMP(in) + phosphate(out). The enzyme catalyses dADP(out) + phosphate(in) + H(+)(out) = dADP(in) + phosphate(out) + H(+)(in). Its activity is regulated as follows. Activated by an increase in cytosolic calcium levels that induce a conformational change of the N-terminal regulatory domain, uncapping the channel and allowing transport. Inhibited by bathophenanthroline, mersalyl, p-hydroxymercuribenzoate, bromcresol purple and tannic acid. Its function is as follows. Electroneutral antiporter that mediates the transport of adenyl nucleotides through the inner mitochondrial membrane. Originally identified as an ATP-magnesium/inorganic phosphate antiporter, it also acts as a broad specificity adenyl nucleotide antiporter. By regulating the mitochondrial matrix adenyl nucleotide pool could adapt to changing cellular energetic demands and indirectly regulate adenyl nucleotide-dependent metabolic pathways. In vitro, a low activity is also observed with guanyl and pyrimidine nucleotides. May play a role in protecting cells against oxidative stress-induced cell death, by buffering calcium levels in the mitochondrial matrix through the formation of calcium-phosphate precipitates. This is Mitochondrial adenyl nucleotide antiporter SLC25A24 from Mus musculus (Mouse).